Consider the following 358-residue polypeptide: NADH-quinone oxidoreductase subunit H (358 aa).

8 helical membrane passes run 20-40, 95-115, 128-148, 168-188, 206-226, 253-273, 295-315, and 334-354; these read ITVGLVVSVIVKIVIILIPLI, ALFYIGPIMSLAPSFAAWAVI, IGLLYILMITSLSVYGVIIAG, ISYEIAMSAALVCVVMVSGSM, VFSWNWLPLFPIFIVYLISAV, GFAFALFFLAEYIFMILIAAL, TPSAFWMFAKMAAVLYWYLWI, and VLIPIGFAYIVILGVWMISPL.

The protein belongs to the complex I subunit 1 family. In terms of assembly, NDH-1 is composed of 14 different subunits. Subunits NuoA, H, J, K, L, M, N constitute the membrane sector of the complex.

It is found in the cell inner membrane. It catalyses the reaction a quinone + NADH + 5 H(+)(in) = a quinol + NAD(+) + 4 H(+)(out). Its function is as follows. NDH-1 shuttles electrons from NADH, via FMN and iron-sulfur (Fe-S) centers, to quinones in the respiratory chain. The immediate electron acceptor for the enzyme in this species is believed to be ubiquinone. Couples the redox reaction to proton translocation (for every two electrons transferred, four hydrogen ions are translocated across the cytoplasmic membrane), and thus conserves the redox energy in a proton gradient. This subunit may bind ubiquinone. In Neisseria meningitidis serogroup B (strain ATCC BAA-335 / MC58), this protein is NADH-quinone oxidoreductase subunit H.